Consider the following 100-residue polypeptide: NADH-quinone oxidoreductase subunit K (100 aa).

3 helical membrane passes run 1-21, 28-48, and 64-84; these read MIGLNHYLIVSGLLFCIGLAG, ILLLFFSTEIMLNAINIGFVA, and FIIAIAASEVAIGLGLVILWF.

Belongs to the complex I subunit 4L family. NDH-1 is composed of 14 different subunits. Subunits NuoA, H, J, K, L, M, N constitute the membrane sector of the complex.

The protein resides in the cell inner membrane. The catalysed reaction is a quinone + NADH + 5 H(+)(in) = a quinol + NAD(+) + 4 H(+)(out). Functionally, NDH-1 shuttles electrons from NADH, via FMN and iron-sulfur (Fe-S) centers, to quinones in the respiratory chain. The immediate electron acceptor for the enzyme in this species is believed to be ubiquinone. Couples the redox reaction to proton translocation (for every two electrons transferred, four hydrogen ions are translocated across the cytoplasmic membrane), and thus conserves the redox energy in a proton gradient. The polypeptide is NADH-quinone oxidoreductase subunit K (Helicobacter pylori (strain P12)).